We begin with the raw amino-acid sequence, 242 residues long: Probable transcriptional regulatory protein XAC3151 (242 aa).

This sequence belongs to the TACO1 family.

The protein resides in the cytoplasm. In Xanthomonas axonopodis pv. citri (strain 306), this protein is Probable transcriptional regulatory protein XAC3151.